The chain runs to 149 residues: MYATMESVRLQSEAQQLAEMILQSETAENYRNCYKRLQEDEEAGRIIRSFIKIKEQYEDVQRFGKYHPDYREISRKMREIKRELDLNDKVADFKRAENELQSILDEVSVEIGTAVSEHVKVPTGNPYFDGLSSCGGGCGSGGSCGCKVS.

Its subcellular location is the cytoplasm. Regulates sporulation prior to stage II. Positively controls the competence regulator ComK at a post-transcriptional level. May modulate the translation, stability or activity of ComS. May work together with YmcA to regulate community development. This chain is Regulatory protein YlbF (ylbF), found in Bacillus subtilis (strain 168).